An 86-amino-acid polypeptide reads, in one-letter code: Small ribosomal subunit protein bS20 (86 aa).

Residues 1-27 (MANNKSAKKRAIQAEKRRQHNASRRSM) form a disordered region.

Belongs to the bacterial ribosomal protein bS20 family.

Functionally, binds directly to 16S ribosomal RNA. The protein is Small ribosomal subunit protein bS20 of Vibrio cholerae serotype O1 (strain ATCC 39541 / Classical Ogawa 395 / O395).